Reading from the N-terminus, the 57-residue chain is UPF0391 membrane protein AZOSEA39630 (57 aa).

A run of 2 helical transmembrane segments spans residues 4–24 (WAII…TGVA) and 37–57 (IALA…VLVF).

This sequence belongs to the UPF0391 family.

It localises to the cell membrane. In Aromatoleum aromaticum (strain DSM 19018 / LMG 30748 / EbN1) (Azoarcus sp. (strain EbN1)), this protein is UPF0391 membrane protein AZOSEA39630.